A 469-amino-acid polypeptide reads, in one-letter code: Cell division protein FtsP (469 aa).

The tat-type signal signal peptide spans 1–29 (MPRLSRRQLLKTAAISTALSTVPAPLLAA). One can recognise a Plastocyanin-like domain in the interval 228–286 (IRLRLLNASLARAYDLRLDNDQEMLLIAQDLSFLPKAKSVKSLVLSPGERAEILVNMNE).

This sequence belongs to the FtsP family. Post-translationally, predicted to be exported by the Tat system. The position of the signal peptide cleavage has not been experimentally proven.

It localises to the periplasm. Cell division protein that is required for growth during stress conditions. May be involved in protecting or stabilizing the divisomal assembly under conditions of stress. The protein is Cell division protein FtsP of Haemophilus influenzae (strain 86-028NP).